The primary structure comprises 344 residues: Phosphoribosylformylglycinamidine cyclo-ligase (344 aa).

The protein belongs to the AIR synthase family.

It is found in the cytoplasm. The catalysed reaction is 2-formamido-N(1)-(5-O-phospho-beta-D-ribosyl)acetamidine + ATP = 5-amino-1-(5-phospho-beta-D-ribosyl)imidazole + ADP + phosphate + H(+). It participates in purine metabolism; IMP biosynthesis via de novo pathway; 5-amino-1-(5-phospho-D-ribosyl)imidazole from N(2)-formyl-N(1)-(5-phospho-D-ribosyl)glycinamide: step 2/2. The polypeptide is Phosphoribosylformylglycinamidine cyclo-ligase (Haemophilus influenzae (strain PittGG)).